We begin with the raw amino-acid sequence, 262 residues long: MFKEKVGKIILYPVYKFYEKILWNEIKNGPFPQHVGIIPDGNRRWARANNLSINDAYYSGYRKLKQVLLWLLEMGIKNITVFALSTENCDKRSNLELNTIFNYIKAGLEELLYGEIIYKYEVKVRAIGLIYKLPLDLLEVLNQLSKKTENFNKRKLTLAICYGGRQEIIDATKKIIADYEKGKIKLDDINENIFRQYLYDKELEDIDLVIRSSGEIRISNFLLWHIAYSELFFVDTYWPDFRKIDLWRAIRSYQKRKRNFGA.

The active site involves aspartate 40. Aspartate 40 is a Mg(2+) binding site. Residues 41–44 (GNRR), tryptophan 45, and 85–87 (STE) contribute to the substrate site. Asparagine 88 functions as the Proton acceptor in the catalytic mechanism. Residues arginine 92, arginine 211, and 217-219 (RIS) each bind substrate. Mg(2+) is bound at residue glutamate 230.

This sequence belongs to the UPP synthase family. As to quaternary structure, homodimer. It depends on Mg(2+) as a cofactor.

The catalysed reaction is geranylgeranyl diphosphate + 7 isopentenyl diphosphate = tri-trans,hepta-cis-undecaprenyl diphosphate + 7 diphosphate. Its function is as follows. Catalyzes the sequential condensation of isopentenyl diphosphate (IPP) with geranylgeranyl diphosphate (GGPP) to yield (2Z,6Z,10Z,14Z,18Z,22Z,26Z,30E,34E,38E)-undecaprenyl diphosphate (tritrans,heptacis-UPP). It is probably the precursor of glycosyl carrier lipids. This chain is Tritrans,polycis-undecaprenyl-diphosphate synthase (geranylgeranyl-diphosphate specific), found in Sulfurisphaera tokodaii (strain DSM 16993 / JCM 10545 / NBRC 100140 / 7) (Sulfolobus tokodaii).